Reading from the N-terminus, the 1363-residue chain is Clustered mitochondria protein homolog (1363 aa).

TPR repeat units follow at residues 29-63 (LPSFFNVGDDYLTIPSSYEENIADLKQALNIIVLC) and 120-154 (KEKSYNLASIYEQISRFREVIGLHYIDRLSNDIGS). The disordered stretch occupies residues 172-191 (KEAKKEESTEKEQQEKEELS). The TPR 3 repeat unit spans residues 283–316 (STINFNPTIKINEKGKFNKSYLLYDLVCQLSPLF). Residues 361–631 (DLSRSQLSSL…RTTPRDIEFI (271 aa)) enclose the Clu domain. The disordered stretch occupies residues 521–544 (PVITSPTTDAEGKNEAEEPESEPV). A TPR 4 repeat occupies 548-581 (VYGLSSDGSRILEDKSFEEPLKQIGDFFHLKPHK). Positions 799–832 (AKAEKKREEEKEKEEKEATESEDKKEKKEDKEDA) are enriched in basic and acidic residues. The disordered stretch occupies residues 799–844 (AKAEKKREEEKEKEEKEATESEDKKEKKEDKEDAEKEEAEAEEEVP). Over residues 833-842 (EKEEAEAEEE) the composition is skewed to acidic residues. TPR repeat units follow at residues 1057–1090 (VEEIYSNARSHLVQGNKEMGMALFNELLAINESI), 1141–1174 (ITAYMNSAYYESSNEQYLNSLKLYKEAMNTWSLV), 1183–1216 (INTLTNLSESLLKIKAYDSALELLQEALEITKKL), and 1225–1258 (GFIYYRIANIVVTLNKFKESKELFDKAYDIFMKL). The disordered stretch occupies residues 1291–1363 (QQETQKKSKT…SGSKKSNKKK (73 aa)). Over residues 1330-1342 (PPQSNPEIANQSI) the composition is skewed to polar residues.

It belongs to the CLU family. In terms of assembly, may associate with the eukaryotic translation initiation factor 3 (eIF-3) complex.

Its subcellular location is the cytoplasm. In terms of biological role, mRNA-binding protein involved in proper cytoplasmic distribution of mitochondria. The sequence is that of Clustered mitochondria protein homolog from Candida albicans (strain SC5314 / ATCC MYA-2876) (Yeast).